Reading from the N-terminus, the 568-residue chain is Proline--tRNA ligase (568 aa).

Belongs to the class-II aminoacyl-tRNA synthetase family. ProS type 1 subfamily. In terms of assembly, homodimer.

The protein resides in the cytoplasm. It catalyses the reaction tRNA(Pro) + L-proline + ATP = L-prolyl-tRNA(Pro) + AMP + diphosphate. In terms of biological role, catalyzes the attachment of proline to tRNA(Pro) in a two-step reaction: proline is first activated by ATP to form Pro-AMP and then transferred to the acceptor end of tRNA(Pro). As ProRS can inadvertently accommodate and process non-cognate amino acids such as alanine and cysteine, to avoid such errors it has two additional distinct editing activities against alanine. One activity is designated as 'pretransfer' editing and involves the tRNA(Pro)-independent hydrolysis of activated Ala-AMP. The other activity is designated 'posttransfer' editing and involves deacylation of mischarged Ala-tRNA(Pro). The misacylated Cys-tRNA(Pro) is not edited by ProRS. This is Proline--tRNA ligase from Campylobacter jejuni subsp. jejuni serotype O:6 (strain 81116 / NCTC 11828).